Reading from the N-terminus, the 427-residue chain is Peptidase B (427 aa).

K195 and D200 together coordinate Mn(2+). Residue K207 is part of the active site. Mn(2+) contacts are provided by D218, D277, and E279. R281 is an active-site residue.

It belongs to the peptidase M17 family. In terms of assembly, homohexamer. Requires Mn(2+) as cofactor.

Its subcellular location is the cytoplasm. It catalyses the reaction Release of an N-terminal amino acid, Xaa, from a peptide or arylamide. Xaa is preferably Glu or Asp but may be other amino acids, including Leu, Met, His, Cys and Gln.. Its function is as follows. Probably plays an important role in intracellular peptide degradation. The chain is Peptidase B from Salmonella dublin (strain CT_02021853).